Here is a 299-residue protein sequence, read N- to C-terminus: Phosphoribosylaminoimidazole-succinocarboxamide synthase (299 aa).

This sequence belongs to the SAICAR synthetase family.

It catalyses the reaction 5-amino-1-(5-phospho-D-ribosyl)imidazole-4-carboxylate + L-aspartate + ATP = (2S)-2-[5-amino-1-(5-phospho-beta-D-ribosyl)imidazole-4-carboxamido]succinate + ADP + phosphate + 2 H(+). The protein operates within purine metabolism; IMP biosynthesis via de novo pathway; 5-amino-1-(5-phospho-D-ribosyl)imidazole-4-carboxamide from 5-amino-1-(5-phospho-D-ribosyl)imidazole-4-carboxylate: step 1/2. The protein is Phosphoribosylaminoimidazole-succinocarboxamide synthase of Leifsonia xyli subsp. xyli (strain CTCB07).